The primary structure comprises 762 residues: Alpha-xylosidase XylQ (762 aa).

Aspartate 414 functions as the Nucleophile in the catalytic mechanism. Glutamate 417 is a catalytic residue.

This sequence belongs to the glycosyl hydrolase 31 family.

The protein localises to the cell membrane. The catalysed reaction is Hydrolysis of terminal, non-reducing alpha-D-xylose residues with release of alpha-D-xylose.. Involved in the metabolism of isoprimeverose. Hydrolyzes isoprimeverose into equimolar amounts of glucose and xylose. In vitro, can also use p-nitrophenyl-alpha-D-xylopyranoside (alpha-p-NPX). The protein is Alpha-xylosidase XylQ of Lactiplantibacillus pentosus (Lactobacillus pentosus).